The sequence spans 276 residues: Probable ribose-5-phosphate isomerase 3, chloroplastic (276 aa).

Residues 1–39 (MASLSFVSSSHLTLRTPSIALRSTGSSPRTSVSFSVKAQ) constitute a chloroplast transit peptide. S40 is modified (N-acetylserine). Residue S108 is modified to Phosphoserine.

The protein belongs to the ribose 5-phosphate isomerase family. Post-translationally, phosphorylated by SRK2C.

The protein localises to the plastid. The protein resides in the chloroplast. The enzyme catalyses aldehydo-D-ribose 5-phosphate = D-ribulose 5-phosphate. It participates in carbohydrate degradation; pentose phosphate pathway; D-ribose 5-phosphate from D-ribulose 5-phosphate (non-oxidative stage): step 1/1. Catalyzes the reversible conversion of ribose-5-phosphate to ribulose 5-phosphate. This is Probable ribose-5-phosphate isomerase 3, chloroplastic (RPI3) from Arabidopsis thaliana (Mouse-ear cress).